Consider the following 285-residue polypeptide: Putative phosphatase MG125 (285 aa).

The active-site Nucleophile is Asp-8. Asp-8 contributes to the Mg(2+) binding site. Position 9 (Leu-9) interacts with phosphate. A Mg(2+)-binding site is contributed by Asp-10. Phosphate contacts are provided by residues 44 to 45 (TG) and Lys-205. Residues Asp-228 and Ser-229 each coordinate Mg(2+). Phosphate is bound at residue Asn-231.

The protein belongs to the HAD-like hydrolase superfamily. Cof family. It depends on Mg(2+) as a cofactor.

This Mycoplasma genitalium (strain ATCC 33530 / DSM 19775 / NCTC 10195 / G37) (Mycoplasmoides genitalium) protein is Putative phosphatase MG125.